A 166-amino-acid polypeptide reads, in one-letter code: Small ribosomal subunit protein uS5 (166 aa).

The region spanning 11 to 74 (LQEKLIAVNR…EQAKRNLSKV (64 aa)) is the S5 DRBM domain.

It belongs to the universal ribosomal protein uS5 family. In terms of assembly, part of the 30S ribosomal subunit. Contacts proteins S4 and S8.

With S4 and S12 plays an important role in translational accuracy. In terms of biological role, located at the back of the 30S subunit body where it stabilizes the conformation of the head with respect to the body. The polypeptide is Small ribosomal subunit protein uS5 (Aeromonas salmonicida (strain A449)).